Here is a 325-residue protein sequence, read N- to C-terminus: D site-binding protein (325 aa).

3 disordered regions span residues 1–98 (MARP…AGPS), 124–203 (LEHG…EVLM), and 230–256 (FSEE…QKDE). The segment covering 17–28 (GPAGAPPGGGAL) has biased composition (gly residues). Residues 71–80 (AGPADAPSGA) are compositionally biased toward low complexity. Position 86 is a phosphoserine (Ser-86). The segment covering 88-98 (RGRSGPVAGPS) has biased composition (low complexity). The segment covering 129-153 (PPSPPPPGGLSPAPSPARTPAPSPG) has biased composition (pro residues). Over residues 154 to 171 (PGSCSSSSPRSSPGHAPA) the composition is skewed to low complexity. One can recognise a bZIP domain in the interval 255–318 (DEKYWSRRYK…SHYRAVLSRY (64 aa)). Residues 257 to 279 (KYWSRRYKNNEAAKRSRDARRLK) are basic motif. A leucine-zipper region spans residues 283–297 (ISVRAAFLEKENALL).

It belongs to the bZIP family. PAR subfamily. In terms of assembly, binds DNA as a homodimer or a heterodimer. Can form a heterodimer with TEF. In terms of tissue distribution, expressed in the suprachiasmatic nuclei (SCN) and in most peripheral tissues, with a strong circadian rhythmicity.

The protein resides in the nucleus. Its function is as follows. This transcriptional activator recognizes and binds to the sequence 5'-RTTAYGTAAY-3' found in the promoter of genes such as albumin, CYP2A4 and CYP2A5. It is not essential for circadian rhythm generation, but modulates important clock output genes. May be a direct target for regulation by the circadian pacemaker component clock. May affect circadian period and sleep regulation. The sequence is that of D site-binding protein (Dbp) from Mus musculus (Mouse).